The chain runs to 162 residues: Tegument protein BLRF2 (162 aa).

A coiled-coil region spans residues 12 to 43; that stretch reads VKAVDMSMEDMAARLARLESENKALKQQVLRG. The interval 118–162 is disordered; sequence SMLGAKGQPSPGEGTRPRESNDPNATRRARSRSRGREAKKVQISD. Residues 151-162 are compositionally biased toward basic and acidic residues; the sequence is RGREAKKVQISD.

It belongs to the herpesviridae BLRF2 family. Homooligomer; homooligomerizes and binds double-stranded DNA (dsDNA) cooperatively. Interacts with host CGAS.

It localises to the virion tegument. The protein resides in the host cytoplasm. Its function is as follows. Plays a role in the inhibition of host innate immune system by targeting the CGAS enzymatic activity which is the principal cytosolic DNA sensor that detects invading viral DNA. Acts by inhibiting CGAS-DNA phase separation: directly binds double-stranded DNA (dsDNA) in a length dependent but sequence independent manner and is able to form DNA-induced phase separation in infected cells. DNA phase separation of ORF52 mediates disruption of liquid-like droplets in which CGAS is activated, thereby preventing CGAS activity. This chain is Tegument protein BLRF2, found in Homo sapiens (Human).